The chain runs to 206 residues: Small ribosomal subunit protein uS4 (206 aa).

An S4 RNA-binding domain is found at 96–156; it reads SRLDNIVYRL…KKSKNQLRIK (61 aa).

It belongs to the universal ribosomal protein uS4 family. In terms of assembly, part of the 30S ribosomal subunit. Contacts protein S5. The interaction surface between S4 and S5 is involved in control of translational fidelity.

In terms of biological role, one of the primary rRNA binding proteins, it binds directly to 16S rRNA where it nucleates assembly of the body of the 30S subunit. With S5 and S12 plays an important role in translational accuracy. The protein is Small ribosomal subunit protein uS4 of Buchnera aphidicola subsp. Cinara cedri (strain Cc).